A 582-amino-acid polypeptide reads, in one-letter code: Protein LYRIC (582 aa).

At 1–48 (MAARSWQDELAQQAEEGSARLREMLSVGLGFLRTELGLDLGLEPKRYP) the chain is on the lumenal side. The segment at 1–71 (MAARSWQDEL…LLLFLLGYGW (71 aa)) is activation of NF-kappa-B. A helical transmembrane segment spans residues 49-69 (GWVILVGTGALGLLLLFLLGY). Over 70-582 (GWAAACAGAR…KKKKKARRET (513 aa)) the chain is Cytoplasmic. The tract at residues 72–169 (AAACAGARKK…EKSKKNKKKS (98 aa)) is interaction with BCCIP. The disordered stretch occupies residues 78 to 222 (ARKKRRSPPR…DSGSLDSTIP (145 aa)). Over residues 93 to 106 (AAVPAAAPDDLALL) the composition is skewed to low complexity. The interval 101-205 (DDLALLKNLR…ISHREKRQQR (105 aa)) is interaction with RELA. A compositionally biased stretch (basic and acidic residues) spans 109–127 (LRSEEQKKKNRKKLSEKPK). Thr-143 bears the Phosphothreonine mark. Positions 160–169 (EKSKKNKKKS) are enriched in basic residues. Ser-180 is subject to Phosphoserine. Basic residues predominate over residues 198–208 (HREKRQQRKRD). Residues Ser-216 and Ser-251 each carry the phosphoserine modification. N6-acetyllysine is present on Lys-264. Residues 280–582 (TVNGGGWNEK…KKKKKARRET (303 aa)) are disordered. Residues Ser-298, Ser-306, Ser-308, Ser-311, Ser-323, Ser-339, Ser-344, and Ser-369 each carry the phosphoserine modification. The span at 320–333 (SAWSQDTGDANTNG) shows a compositional bias: polar residues. 2 stretches are compositionally biased toward polar residues: residues 354–372 (EPVS…SRNQ) and 383–394 (NGLSSADPNSDW). The tract at residues 381-443 (GLNGLSSADP…EGALPTGKSK (63 aa)) is lung-homing for mammary tumors. Residues Ser-415 and Ser-426 each carry the phosphoserine modification. Residues 421-434 (DDQKVSDDDKEKGE) are compositionally biased toward basic and acidic residues. Residues 441-451 (KSKKKKKKKKK) show a composition bias toward basic residues. Ser-457 carries the phosphoserine modification. Thr-458 is modified (phosphothreonine). Phosphoserine occurs at positions 478, 494, and 496. Polar residues-rich tracts occupy residues 504–520 (KNSQ…STEP) and 549–568 (NTKQ…SWES). Ser-568 carries the post-translational modification Phosphoserine. Over residues 571–582 (QIKKKKKARRET) the composition is skewed to basic residues.

As to quaternary structure, interacts with BCCIP, CREBBP/CBP and RELA/p65. Widely expressed with highest levels in muscle-dominating organs such as skeletal muscle, heart, tongue and small intestine and in endocrine glands such as thyroid and adrenal gland. Overexpressed in various cancers including breast, brain, prostate, melanoma and glioblastoma multiforme.

The protein localises to the endoplasmic reticulum membrane. It localises to the nucleus membrane. The protein resides in the cell junction. Its subcellular location is the tight junction. It is found in the nucleus. The protein localises to the nucleolus. It localises to the cytoplasm. The protein resides in the perinuclear region. Its function is as follows. Down-regulates SLC1A2/EAAT2 promoter activity when expressed ectopically. Activates the nuclear factor kappa-B (NF-kappa-B) transcription factor. Promotes anchorage-independent growth of immortalized melanocytes and astrocytes which is a key component in tumor cell expansion. Promotes lung metastasis and also has an effect on bone and brain metastasis, possibly by enhancing the seeding of tumor cells to the target organ endothelium. Induces chemoresistance. The chain is Protein LYRIC (MTDH) from Homo sapiens (Human).